The chain runs to 79 residues: Protein S100-G (79 aa).

The residue at position 2 (serine 2) is an N-acetylserine. EF-hand domains are found at residues 13–48 (IFEK…KGSS) and 45–79 (KGSS…KISQ). Residues glutamine 26 and glutamate 31 each coordinate Ca(2+). Serine 47 is modified (phosphoserine). Ca(2+) is bound by residues aspartate 58, asparagine 60, aspartate 62, glutamate 64, and glutamate 69.

This sequence belongs to the S-100 family.

The sequence is that of Protein S100-G (S100G) from Equus caballus (Horse).